A 362-amino-acid chain; its full sequence is MTPAGKRILVMAGGTGGHVFPALAVAKYLAQQGWQVRWLGTADRMEARLVPQYGFDIDFIDIKGVRGNGLIRKLAAPFKVVRSILQAKAVIAEFKPDVVLGMGGFASGPGGVAARLAGIPLVLHEQNAIPGMTNKLLSRIATQVLCAFKNTFTTVKAKVVGNPIRQELIALGAEPKPEADEALKVLVVGGSLGAKVFNDLMPEAVAILSQQQFVTVWHQVGKDNLTGVKAAYQQHGQDGGVNIAEFIDDMEAAYRWADVVLCRAGALTVSELAAVGLPSILVPYPHAVDDHQTRNGQVLVEAGAAFLLPQAILDVNKLAGKLQLLANDRTELARMGQRARDVAVLDATEQVAAVCISLAEKG.

UDP-N-acetyl-alpha-D-glucosamine-binding positions include 15–17, asparagine 127, arginine 165, serine 191, isoleucine 247, 266–271, and glutamine 292; these read TGG and ALTVSE.

Belongs to the glycosyltransferase 28 family. MurG subfamily.

It localises to the cell inner membrane. The catalysed reaction is di-trans,octa-cis-undecaprenyl diphospho-N-acetyl-alpha-D-muramoyl-L-alanyl-D-glutamyl-meso-2,6-diaminopimeloyl-D-alanyl-D-alanine + UDP-N-acetyl-alpha-D-glucosamine = di-trans,octa-cis-undecaprenyl diphospho-[N-acetyl-alpha-D-glucosaminyl-(1-&gt;4)]-N-acetyl-alpha-D-muramoyl-L-alanyl-D-glutamyl-meso-2,6-diaminopimeloyl-D-alanyl-D-alanine + UDP + H(+). It functions in the pathway cell wall biogenesis; peptidoglycan biosynthesis. Its function is as follows. Cell wall formation. Catalyzes the transfer of a GlcNAc subunit on undecaprenyl-pyrophosphoryl-MurNAc-pentapeptide (lipid intermediate I) to form undecaprenyl-pyrophosphoryl-MurNAc-(pentapeptide)GlcNAc (lipid intermediate II). The protein is UDP-N-acetylglucosamine--N-acetylmuramyl-(pentapeptide) pyrophosphoryl-undecaprenol N-acetylglucosamine transferase of Shewanella baltica (strain OS155 / ATCC BAA-1091).